A 232-amino-acid chain; its full sequence is Large ribosomal subunit protein uL1 (232 aa).

This sequence belongs to the universal ribosomal protein uL1 family. As to quaternary structure, part of the 50S ribosomal subunit.

Functionally, binds directly to 23S rRNA. The L1 stalk is quite mobile in the ribosome, and is involved in E site tRNA release. Its function is as follows. Protein L1 is also a translational repressor protein, it controls the translation of the L11 operon by binding to its mRNA. The chain is Large ribosomal subunit protein uL1 from Burkholderia vietnamiensis (strain G4 / LMG 22486) (Burkholderia cepacia (strain R1808)).